The chain runs to 109 residues: Protease inhibitor SIL-V2 (109 aa).

Intrachain disulfides connect C30–C45 and C67–C97.

The protein belongs to the protease inhibitor I16 (SSI) family. In terms of assembly, homodimer.

It is found in the secreted. This chain is Protease inhibitor SIL-V2, found in Streptomyces orinoci (Streptoverticillium orinoci).